The sequence spans 124 residues: Large ribosomal subunit protein bL12 (124 aa).

This sequence belongs to the bacterial ribosomal protein bL12 family. In terms of assembly, homodimer. Part of the ribosomal stalk of the 50S ribosomal subunit. Forms a multimeric L10(L12)X complex, where L10 forms an elongated spine to which 2 to 4 L12 dimers bind in a sequential fashion. Binds GTP-bound translation factors.

Functionally, forms part of the ribosomal stalk which helps the ribosome interact with GTP-bound translation factors. Is thus essential for accurate translation. The protein is Large ribosomal subunit protein bL12 of Hamiltonella defensa subsp. Acyrthosiphon pisum (strain 5AT).